The following is a 567-amino-acid chain: Phenylalanine--tRNA ligase beta subunit (567 aa).

In terms of domain architecture, B5 spans 284–359; sequence FAVRTKHVSH…RAYDFNDLTP (76 aa). Mg(2+) is bound by residues Asp337, Asp343, Asp346, and Asp347.

The protein belongs to the phenylalanyl-tRNA synthetase beta subunit family. Type 2 subfamily. Tetramer of two alpha and two beta subunits. Mg(2+) serves as cofactor.

Its subcellular location is the cytoplasm. It carries out the reaction tRNA(Phe) + L-phenylalanine + ATP = L-phenylalanyl-tRNA(Phe) + AMP + diphosphate + H(+). This chain is Phenylalanine--tRNA ligase beta subunit, found in Halobacterium salinarum (strain ATCC 29341 / DSM 671 / R1).